Consider the following 146-residue polypeptide: Holo-[acyl-carrier-protein] synthase (146 aa).

Aspartate 9 and glutamate 63 together coordinate Mg(2+).

This sequence belongs to the P-Pant transferase superfamily. AcpS family. Requires Mg(2+) as cofactor.

The protein resides in the cytoplasm. The enzyme catalyses apo-[ACP] + CoA = holo-[ACP] + adenosine 3',5'-bisphosphate + H(+). Its function is as follows. Transfers the 4'-phosphopantetheine moiety from coenzyme A to a Ser of acyl-carrier-protein. This is Holo-[acyl-carrier-protein] synthase from Burkholderia multivorans (strain ATCC 17616 / 249).